The sequence spans 1602 residues: Mediator of RNA polymerase II transcription subunit 26 (1602 aa).

The TFIIS N-terminal domain occupies 8–85 (QLTSHLSQAL…KMWREMVGIQ (78 aa)). 5 disordered regions span residues 86–108 (QTAN…PSAH), 238–298 (VTDS…AQNE), 399–481 (EDSI…KGVD), 580–617 (FSNK…SLDS), and 694–736 (SDNG…MDTP). Positions 273–285 (RPKKFKKDKKHKE) are enriched in basic residues. A compositionally biased stretch (polar residues) spans 401–414 (SITNDSSTSCSRLS). Over residues 418–431 (VEERRKSDKIDDSI) the composition is skewed to basic and acidic residues. Residues 467-477 (VPKKRGRKKGS) show a composition bias toward basic residues. Residues 587–604 (AGNTDSDTITSEPSQDSN) are compositionally biased toward polar residues. Over residues 715-728 (KQEEQLPKLERLSD) the composition is skewed to basic and acidic residues. Residues 792-820 (LDVASVNADTVQNQINSHNQEGETSEEQN) adopt a coiled-coil conformation. Disordered stretches follow at residues 1035–1158 (FEET…EVEN) and 1372–1407 (NTSA…NESD). Residues 1056 to 1070 (SSSSNSSCSNSSNSS) are compositionally biased toward low complexity. Positions 1073 to 1083 (KTQDSINEKLR) are enriched in basic and acidic residues. Basic residues predominate over residues 1101-1112 (RKRRGKNRKKRN). Residues 1124–1143 (ISLNGTISNLSSSNNSSSSE) are compositionally biased toward low complexity. A compositionally biased stretch (acidic residues) spans 1144–1158 (SETETGLENENEVEN). Residues 1378–1388 (TVSEDPLKIEE) are compositionally biased toward basic and acidic residues.

Belongs to the Mediator complex subunit 26 family. Component of the Mediator complex.

Its subcellular location is the nucleus. Component of the Mediator complex, a coactivator involved in the regulated transcription of nearly all RNA polymerase II-dependent genes. Mediator functions as a bridge to convey information from gene-specific regulatory proteins to the basal RNA polymerase II transcription machinery. Mediator is recruited to promoters by direct interactions with regulatory proteins and serves as a scaffold for the assembly of a functional preinitiation complex with RNA polymerase II and the general transcription factors. The protein is Mediator of RNA polymerase II transcription subunit 26 (MED26) of Drosophila pseudoobscura pseudoobscura (Fruit fly).